The following is a 240-amino-acid chain: Hairy and enhancer of split-related protein HELT (240 aa).

Positions 10-65 constitute a bHLH domain; the sequence is RTPVSHKVIEKRRRDRINRCLNELGKTVPMALAKQSSGKLEKAEILEMTVQYLRAL. N6-acetyllysine is present on Lys-48. Positions 86–121 constitute an Orange domain; the sequence is FHYGYHECMKNLVHYLTTVERMETKDTKYARILAFL.

This sequence belongs to the HEY family. As to quaternary structure, self-associates. Interacts with HES5 and HEY2. Expressed in heart and testis.

It localises to the nucleus. Functionally, transcriptional repressor which binds preferentially to the canonical E box sequence 5'-CACGCG-3'. Required for the development of GABAergic neurons. The sequence is that of Hairy and enhancer of split-related protein HELT (Helt) from Mus musculus (Mouse).